A 119-amino-acid polypeptide reads, in one-letter code: Protein Wnt-4 (119 aa).

Serine 1 is lipidated: O-palmitoleoyl serine; by PORCN. 2 disulfides stabilise this stretch: cysteine 69–cysteine 100 and cysteine 85–cysteine 95. An N-linked (GlcNAc...) asparagine glycan is attached at asparagine 86.

The protein belongs to the Wnt family. In terms of processing, palmitoleoylation is required for efficient binding to frizzled receptors. Depalmitoleoylation leads to Wnt signaling pathway inhibition.

It is found in the secreted. The protein localises to the extracellular space. The protein resides in the extracellular matrix. Ligand for members of the frizzled family of seven transmembrane receptors. Plays an important role in embryonic development. This chain is Protein Wnt-4 (WNT-4), found in Plestiodon skiltonianus (Western skink).